A 592-amino-acid polypeptide reads, in one-letter code: Frizzled-5 (592 aa).

A signal peptide spans 1–38 (MRKPADEHHFTMETSGMHLVGFWLHVLLLFQLSGLGDS). The Extracellular portion of the chain corresponds to 39–248 (ASKDIVCEPI…QDERTFTTFW (210 aa)). In terms of domain architecture, FZ spans 40–161 (SKDIVCEPIT…GDTDRLCMDR (122 aa)). 5 cysteine pairs are disulfide-bonded: Cys-45/Cys-106, Cys-53/Cys-99, Cys-90/Cys-128, Cys-117/Cys-158, and Cys-121/Cys-145. The interval 162 to 192 (NSSETTTLSPPFPKPTPKGTPRHRATAKSAP) is disordered. The chain crosses the membrane as a helical span at residues 249–269 (IGLWSVLCFVSTFTTVATFLI). At 270 to 280 (DMERFKYPERP) the chain is on the cytoplasmic side. The helical transmembrane segment at 281–301 (IIFLAACYLFVSLGYIVRLLA) threads the bilayer. Residues 302–327 (GHERVACEGTGDQQHILYDTTGPALC) lie on the Extracellular side of the membrane. Residues 328–348 (TLVFLLIYFFGMASSIWWVVL) traverse the membrane as a helical segment. The Cytoplasmic segment spans residues 349–370 (SFTWFLAAGMKWGNEAIAGYSQ). The helical transmembrane segment at 371–391 (YFHLAAWLVPSVKSIAVLALS) threads the bilayer. Topologically, residues 392–414 (SVDGDPVAGICYVGNQSLEGLRG) are extracellular. A helical membrane pass occupies residues 415–435 (FVLAPLVVYLFTGSLFLLAGF). Residues 436-461 (VSLFRIRSVIKQGGTKTDKLEKLMIR) are Cytoplasmic-facing. A helical membrane pass occupies residues 462-482 (IGLFTVLYTVPATIVVACLVY). Over 483 to 512 (EQHYRPSWERALACSCPSERQRLGMGPDYA) the chain is Extracellular. Residues 513–533 (VFMLKYFMCLVVGITSGVWIW) form a helical membrane-spanning segment. At 534-592 (SGKTLESWRRFIARYVPCRTRKPPVSASSMYSEASTALTARAGTAPTGTYHKSAPSSHV) the chain is on the cytoplasmic side.

This sequence belongs to the G-protein coupled receptor Fz/Smo family.

The protein localises to the cell membrane. It localises to the golgi apparatus membrane. Its subcellular location is the synapse. The protein resides in the perikaryon. It is found in the cell projection. The protein localises to the dendrite. It localises to the axon. In terms of biological role, receptor for Wnt proteins. Following binding, activates the canonical Wnt/beta-catenin signaling pathway. Also activates wnt non-canonical signaling. In neurons, activation of the Wnt pathway promotes formation of synapses. May be involved in transduction and intercellular transmission of polarity information during tissue morphogenesis and/or in differentiated tissues. Plays a role in early eye development, possibly through wnt non-canonical signaling. As a receptor for wnt11, promotes eye formation, at least partially, by antagonizing the Wnt/beta-catenin pathway. In addition, promotes coherence of eye field cells, potentially contributing to the coordinated morphogenetic behaviors of cells in the nascent eye field. This Danio rerio (Zebrafish) protein is Frizzled-5 (fzd5).